Here is an 846-residue protein sequence, read N- to C-terminus: Putative transcriptional regulator tpeD (846 aa).

The BED-type; degenerate zinc finger occupies 104–166 (KHQSECWQHF…NCRKSVPVSK (63 aa)). A disordered region spans residues 734 to 846 (RAREERDAQQ…RDEDFVYETP (113 aa)). The span at 756–769 (PISDSEEAESEDES) shows a compositional bias: acidic residues. Residues 773 to 786 (PQSPQASQARSQRS) show a composition bias toward low complexity. The span at 797 to 809 (PLIELDGNEEDEV) shows a compositional bias: acidic residues.

The protein resides in the nucleus. Its function is as follows. Putative transcriptional regulator; part of the gene cluster that mediates the biosynthesis of polyesters containing 2,4-dihydroxy-6-(2-hydroxypropyl)benzoate and 3-hydroxybutyrate moieties, such as talapolyester G, 15G256beta and 15G256beta-2; as well as to oxidized derivatives such as 15G256alpha. This is Putative transcriptional regulator tpeD from Talaromyces stipitatus (strain ATCC 10500 / CBS 375.48 / QM 6759 / NRRL 1006) (Penicillium stipitatum).